A 387-amino-acid chain; its full sequence is GTP-binding protein 10 (387 aa).

Residues 13–148 enclose the Obg domain; it reads GNFIDKLRLF…RIIHLDLKLI (136 aa). One can recognise an OBG-type G domain in the interval 149–344; that stretch reads ADVGLVGFPN…LKNCIRKSLD (196 aa). GTP contacts are provided by residues 155-162, 202-206, and 278-281; these read GFPNAGKS, DLPGL, and NKMD.

It belongs to the TRAFAC class OBG-HflX-like GTPase superfamily. OBG GTPase family.

The protein localises to the nucleus. The protein resides in the nucleolus. Its subcellular location is the chromosome. May be involved in the ribosome maturation process. Complements an ObgE(CgtA) function in E.coli ribosome maturation. Plays a role of GTPase in vitro. When missing, disorganization of the nucleolar architecture is observed. The polypeptide is GTP-binding protein 10 (GTPBP10) (Homo sapiens (Human)).